Reading from the N-terminus, the 415-residue chain is Sphingomyelin synthase-related protein 1 (415 aa).

One can recognise an SAM domain in the interval 12–78 (WTTKHVAVWL…MLSVRKLQKI (67 aa)). 4 consecutive transmembrane segments (helical) span residues 153-173 (ILSCIYVFIVFGFTSFIMVIV), 201-221 (FAMTEVCGMILCYIWLLVLLL), 232-252 (LCSLMGTVFLLRCFTMFVTSL), and 277-297 (FAIWSGFGMTLTGVHTCGDYM). Residue histidine 301 is part of the active site. The chain crosses the membrane as a helical span at residues 322–342 (FLHTLSWVLNLFGIFFILAAH). Residues histidine 344 and aspartate 348 contribute to the active site. Residues 347–367 (IDVFIAFYITTRLFLYYHTLA) traverse the membrane as a helical segment. Residues 368–415 (NTRAYQQSRRARIWFPMFSFFECNVNGTVPNEYCWPFSKPAIMKRLIG) are Cytoplasmic-facing.

It belongs to the sphingomyelin synthase family.

It is found in the endoplasmic reticulum membrane. It carries out the reaction an N-acylsphing-4-enine + a 1,2-diacyl-sn-glycero-3-phosphoethanolamine = an N-acylsphing-4-enine 1-phosphoethanolamine + a 1,2-diacyl-sn-glycerol. The enzyme catalyses an N-acylsphinganine + a 1,2-diacyl-sn-glycero-3-phosphoethanolamine = an N-acylsphinganine-1-phosphoethanolamine + a 1,2-diacyl-sn-glycerol. The catalysed reaction is an N-acyl-(4R)-4-hydroxysphinganine + a 1,2-diacyl-sn-glycero-3-phosphoethanolamine = an N-acyl-(4R)-4-hydroxysphinganine-1-phosphoethanolamine + a 1,2-diacyl-sn-glycerol. It catalyses the reaction N-hexadecanoylsphinganine + a 1,2-diacyl-sn-glycero-3-phosphoethanolamine = N-hexadecanoyl-sphinganine-1-phosphoethanolamine + a 1,2-diacyl-sn-glycerol. It carries out the reaction N-hexadecanoyl-(4R)-hydroxysphinganine + a 1,2-diacyl-sn-glycero-3-phosphoethanolamine = N-hexadecanoyl-(4R)-hydroxysphinganine-1-phosphoethanolamine + a 1,2-diacyl-sn-glycerol. It functions in the pathway sphingolipid metabolism. In terms of biological role, synthesizes sphingolipids through transfer of a phosphatidyl head group from a glycerophospholipid on to the primary hydroxyl of a ceramide in the lumen of the endoplasmic reticulum. Catalyzes the synthesis of ceramide phosphoethanolamines (CPEs) (such as N-acylsphing-4-enine 1-phosphoethanolamine) by transferring phosphoethanolamine head group, which is smaller and more hydrophilic than the phosphocholine (PC) headgroup transferred in the canonical sphingomyelin synthesis (SMS) reaction by SMS1 or SMS2, from a phosphatidylethanolamine (1,2-diacyl-sn-glycero-3-phosphoethanolamine, PE) to a ceramide (such as N-acylsphing-4-enine). The larger PC prevents an efficient fit in the enzyme's catalytic pocket, leading to little or no SMS activity. In vitro, in the absence of ceramide, it has PLC activity with preference for phosphatidylinositol and phosphatidic acid, but also hydrolyzes phosphatidylethanolamine. This chain is Sphingomyelin synthase-related protein 1, found in Homo sapiens (Human).